Here is a 478-residue protein sequence, read N- to C-terminus: Zinc metalloproteinase/disintegrin ussurin (478 aa).

The signal sequence occupies residues 1–20; sequence MIQVLLVTICLAAFPYQGSS. Positions 21-190 are excised as a propeptide; it reads IILESGNVND…KKASPLVVTT (170 aa). The Peptidase M12B domain maps to 193–389; the sequence is RYVELVVVAD…RNPQCILNKP (197 aa). The Ca(2+) site is built by glutamate 196 and aspartate 280. Disulfide bonds link cysteine 304-cysteine 384, cysteine 344-cysteine 368, and cysteine 346-cysteine 351. Histidine 329 is a Zn(2+) binding site. Glutamate 330 is a catalytic residue. Residues histidine 333 and histidine 339 each contribute to the Zn(2+) site. The Ca(2+) site is built by cysteine 384 and asparagine 387. Residues 390-413 constitute a propeptide that is removed on maturation; that stretch reads LRTDIVSTPVSGNELLEAGEECDC. The Disintegrin domain maps to 397–478; it reads TPVSGNELLE…AGCPRNPFHA (82 aa). 6 cysteine pairs are disulfide-bonded: cysteine 411–cysteine 426, cysteine 413–cysteine 421, cysteine 420–cysteine 443, cysteine 434–cysteine 440, cysteine 439–cysteine 464, and cysteine 452–cysteine 471. A Cell attachment site motif is present at residues 456 to 458; that stretch reads RGD.

Belongs to the venom metalloproteinase (M12B) family. P-II subfamily. P-IIa sub-subfamily. As to quaternary structure, monomer. It depends on Zn(2+) as a cofactor. In terms of tissue distribution, expressed by the venom gland.

The protein resides in the secreted. In terms of biological role, impairs hemostasis in the envenomed animal. Inhibits platelet aggregation induced by ADP, thrombin, platelet-activating factor and collagen. Acts by inhibiting fibrinogen interaction with platelet receptors GPIIb/GPIIIa (ITGA2B/ITGB3). The protein is Zinc metalloproteinase/disintegrin ussurin of Gloydius ussuriensis (Ussuri mamushi).